A 725-amino-acid polypeptide reads, in one-letter code: Manganese-exporting P-type ATPase (725 aa).

The 68-residue stretch at 25-92 folds into the HMA domain; it reads GRMRIQIEWV…AISGAAHVAA (68 aa). The next 6 membrane-spanning stretches (helical) occupy residues 101–119, 142–160, 165–179, 188–202, 335–359, and 365–383; these read HSSD…GAAA, LVAS…RGAL, TGTD…IASL, LAVL…YLQD, VGEN…AITK, and MTVL…TPTA. Catalysis depends on Asp416, which acts as the 4-aspartylphosphate intermediate. Mg(2+) is bound by residues Asp416, Thr418, and Asp618. 2 helical membrane-spanning segments follow: residues 669 to 688 and 698 to 717; these read AVEV…AAGL and PVLA…ANSS.

It belongs to the cation transport ATPase (P-type) (TC 3.A.3) family. Type IB subfamily.

The protein resides in the cell membrane. It catalyses the reaction Mn(2+)(in) + ATP + H2O = Mn(2+)(out) + ADP + phosphate + H(+). In terms of biological role, high affinity, slow turnover Mn(2+) transporting ATPase. The chain is Manganese-exporting P-type ATPase (ctpC) from Mycobacterium leprae (strain TN).